The chain runs to 317 residues: LVEKFGIDPNNAFAFWDWVGGRYSVCSAVGVLPLSLQYGFSVVEKFLQGAHSIDQHFSSAPFEKNIPVLLGLLSVWNVSFLGYPARAILPYSQALEKLAPHIQQVSMESNGKGVSIDGLPLPFESGEIDFGEPGTNGQHSFYQLIHQGRVIPCDFIGVVKSQQPVYLKGEVVNNHDELMSNFFAQPDALAYGKTPAQLKKENVSEHLIPHKTFTGNRPSLSILLPTLDAYRIGQLLAIYEHRVAVQGFVWGINSFDQWGVELGKSLATQVRKQLHASRVKGEPVEEGFNFSTKTLLTRYLQATTDVPADPSTLLPNI.

The active-site Proton donor is the Glu108. Residues His139 and Lys264 contribute to the active site.

The protein belongs to the GPI family. As to quaternary structure, homodimer.

The protein resides in the cytoplasm. The catalysed reaction is alpha-D-glucose 6-phosphate = beta-D-fructose 6-phosphate. Its pathway is carbohydrate degradation; glycolysis; D-glyceraldehyde 3-phosphate and glycerone phosphate from D-glucose: step 2/4. This chain is Glucose-6-phosphate isomerase, cytosolic 2B (PGIC2-B), found in Clarkia lewisii (Farewell-to-spring).